Reading from the N-terminus, the 322-residue chain is Acetyl-coenzyme A carboxylase carboxyl transferase subunit alpha (322 aa).

The CoA carboxyltransferase C-terminal domain maps to 32–293 (DISEEIARLE…KRALQDALRQ (262 aa)).

This sequence belongs to the AccA family. Acetyl-CoA carboxylase is a heterohexamer composed of biotin carboxyl carrier protein (AccB), biotin carboxylase (AccC) and two subunits each of ACCase subunit alpha (AccA) and ACCase subunit beta (AccD).

Its subcellular location is the cytoplasm. The enzyme catalyses N(6)-carboxybiotinyl-L-lysyl-[protein] + acetyl-CoA = N(6)-biotinyl-L-lysyl-[protein] + malonyl-CoA. Its pathway is lipid metabolism; malonyl-CoA biosynthesis; malonyl-CoA from acetyl-CoA: step 1/1. In terms of biological role, component of the acetyl coenzyme A carboxylase (ACC) complex. First, biotin carboxylase catalyzes the carboxylation of biotin on its carrier protein (BCCP) and then the CO(2) group is transferred by the carboxyltransferase to acetyl-CoA to form malonyl-CoA. The sequence is that of Acetyl-coenzyme A carboxylase carboxyl transferase subunit alpha from Aromatoleum aromaticum (strain DSM 19018 / LMG 30748 / EbN1) (Azoarcus sp. (strain EbN1)).